We begin with the raw amino-acid sequence, 580 residues long: Viral transcription factor IE2 (580 aa).

Residues 1–11 (MESSAKRKMDP) are compositionally biased toward basic and acidic residues. Disordered regions lie at residues 1–30 (MESSAKRKMDPDNPDEGPSSKVPRPETPVT) and 99–161 (DSSS…VIIK). Residues 99-133 (DSSSTGPTLTTHSCSVSSAPLNKPTPTSVAVTNTP) are compositionally biased toward polar residues. Residues Lys175 and Lys180 each participate in a glycyl lysine isopeptide (Lys-Gly) (interchain with G-Cter in SUMO) cross-link. The short motif at 199–202 (CIVI) is the SUMO-interacting motif 1/SIM1 element. Positions 200–208 (IVISDSEEE) are non-covalent SUMO1 binding region (SIM). Phosphoserine occurs at positions 203 and 205. The interval 206-336 (EEEQGEEVET…SKRISELDNE (131 aa)) is disordered. Composition is skewed to low complexity over residues 216 to 236 (RGATASSPSTGSGTPRVTSPT), 259 to 271 (SSSSSSSCSSASD), and 302 to 317 (AASSSLLSCGHQSSGG). An SUMO-interacting motif 1/SIM2 motif is present at residues 410–413 (IQII). Positions 501–504 (VDLL) match the SUMO-interacting motif 1/SIM3 motif.

This sequence belongs to the HHV-5 IE2 protein family. In terms of assembly, interacts with host SUMO-modified form of TATA-binding protein (TBP)-associated factor 12/TAF12 in a SIM-dependent manner; this interaction increases the transactivation activity of IE2. Interacts with host CHAF1A. Interacts with several components of the host transcriptional machinery including TBP, TF2B and CREB1. Interacts with host DNA replication licensing factor MCM3. Interacts with host PLSCR1; this interaction inhibits IE2 transactivating activity. In terms of processing, phosphorylated by host CK2 at Ser-203 and Ser-205; leading to enhanced SUMOylation. Post-translationally, SUMOylated; SUMOylation is enhanced when IE2 is phosphorylated by host CK2. The sumoylation is necessary for efficient replication of the virus and thus for the function of this viral transcription factor.

It localises to the host nucleus. Functionally, stimulates viral early and late gene expression and thus play a crucial role in the regulation of productive infection. Selectively drives host RNA Pol II transcription initiation at a subset of viral early-late and late promoters without substantially affecting Pol II transcription of expressed host genes. Mechanistically, forms a repressive complex at the major immediate-early promoter region involving direct association with host nucleosomes and TBP. Concerning activation, stimulates transcription by binding nearby, but not within, core promoter regions. In addition, activates quiescent cells to reenter the cell cycle and up-regulates several E2F-responsive genes, which are responsible for pushing the cell into S phase. In S-phase, inhibits cellular DNA synthesis and blocks further cell cycle progression. This Homo sapiens (Human) protein is Viral transcription factor IE2 (UL122).